We begin with the raw amino-acid sequence, 475 residues long: Ribulose bisphosphate carboxylase large chain (475 aa).

Positions 123 and 173 each coordinate substrate. The active-site Proton acceptor is the Lys-175. Lys-177 contributes to the substrate binding site. Mg(2+)-binding residues include Lys-201, Asp-203, and Glu-204. An N6-carboxylysine modification is found at Lys-201. Residue His-294 is the Proton acceptor of the active site. Residues Arg-295, His-327, and Ser-379 each contribute to the substrate site.

This sequence belongs to the RuBisCO large chain family. Type I subfamily. In terms of assembly, heterohexadecamer of 8 large chains and 8 small chains; disulfide-linked. The disulfide link is formed within the large subunit homodimers. The cofactor is Mg(2+). Post-translationally, the disulfide bond which can form in the large chain dimeric partners within the hexadecamer appears to be associated with oxidative stress and protein turnover.

It is found in the plastid. The protein localises to the chloroplast. The catalysed reaction is 2 (2R)-3-phosphoglycerate + 2 H(+) = D-ribulose 1,5-bisphosphate + CO2 + H2O. The enzyme catalyses D-ribulose 1,5-bisphosphate + O2 = 2-phosphoglycolate + (2R)-3-phosphoglycerate + 2 H(+). In terms of biological role, ruBisCO catalyzes two reactions: the carboxylation of D-ribulose 1,5-bisphosphate, the primary event in carbon dioxide fixation, as well as the oxidative fragmentation of the pentose substrate in the photorespiration process. Both reactions occur simultaneously and in competition at the same active site. The protein is Ribulose bisphosphate carboxylase large chain of Euglena gracilis.